A 413-amino-acid polypeptide reads, in one-letter code: Putative F-box protein At3g17560 (413 aa).

Residues 9-55 form the F-box domain; that stretch reads TKLLFDLPQDVIEEIFSKVPVTCLRRIRSTCKRLYALLKDRGFIRKH.

This chain is Putative F-box protein At3g17560, found in Arabidopsis thaliana (Mouse-ear cress).